Here is a 715-residue protein sequence, read N- to C-terminus: Polyribonucleotide nucleotidyltransferase (715 aa).

The Mg(2+) site is built by Asp488 and Asp494. A KH domain is found at 555 to 614 (PRIEVMHIPTDKIRDVIGTGGKVIREIVEKTGAKINIEDDGTVKIASSNGKEIEAARKWI). The S1 motif domain occupies 624-692 (GEIYEGTVVK…ERGKVRLSMK (69 aa)).

It belongs to the polyribonucleotide nucleotidyltransferase family. The cofactor is Mg(2+).

The protein resides in the cytoplasm. It carries out the reaction RNA(n+1) + phosphate = RNA(n) + a ribonucleoside 5'-diphosphate. In terms of biological role, involved in mRNA degradation. Catalyzes the phosphorolysis of single-stranded polyribonucleotides processively in the 3'- to 5'-direction. This Chelativorans sp. (strain BNC1) protein is Polyribonucleotide nucleotidyltransferase.